The following is a 427-amino-acid chain: MGDARDNEAYEEELLDYEEEDEKVPDSGNKVNGEAVKKGYVGIHSSGFRDFLLKPELLRAIVDSGFEHPSEVQHECIPQAILGMDVICQAKSGMGKTAVFVLSTLQQIEPSPGQVSALVLCHTRELAYQICNEFVRFSTYLPDTKVSVFYGGVNIKIHKDLLKNECPHIVVGTPGRVLALAREKDLSLKNVRHFILDECDKMLESLDMRRDVQEIFKMTPHDKQVMMFSATLSKEIRPVCKKFMQDPMEIYVDDEAKLTLHGLVQHYIKLSEMEKNRKLNDLLDALDFNQVVIFVKSVSRAAELNKLLVECNFPSICIHSGMSQEERLTRYKSFKEGHKRILVATDLVGRGIDIERVNIVINYDMPDSADTYLHRVGRAGRFGTKGLAITFVASASDSEVLNQVQERFEVDIKELPEQIDTSTYMPS.

A disordered region spans residues methionine 1–lysine 30. A compositionally biased stretch (acidic residues) spans alanine 9–lysine 23. The Q motif motif lies at serine 46–histidine 74. A Helicase ATP-binding domain is found at isoleucine 77 to isoleucine 250. Alanine 90–threonine 97 is a binding site for ATP. Positions aspartate 197–aspartate 200 match the DECD box motif. A Helicase C-terminal domain is found at lysine 278–threonine 423.

This sequence belongs to the DEAD box helicase family. DECD subfamily. In terms of assembly, interacts with ALY2 and MOS11.

It localises to the nucleus. The enzyme catalyses ATP + H2O = ADP + phosphate + H(+). In terms of biological role, ATP-dependent RNA helicase involved in pre-mRNA splicing. Required for the export of mRNA out of the nucleus. In addition to ssRNA and dsRNA, binds dsDNA, but not ssDNA. This is DEAD-box ATP-dependent RNA helicase 56 (RH56) from Arabidopsis thaliana (Mouse-ear cress).